The sequence spans 370 residues: Chorismate synthase (370 aa).

Arg-47 is a binding site for NADP(+). Residues 124–126 (RSS), Gly-286, 301–305 (KPTAT), and Arg-327 each bind FMN.

It belongs to the chorismate synthase family. As to quaternary structure, homotetramer. FMNH2 serves as cofactor.

The enzyme catalyses 5-O-(1-carboxyvinyl)-3-phosphoshikimate = chorismate + phosphate. It functions in the pathway metabolic intermediate biosynthesis; chorismate biosynthesis; chorismate from D-erythrose 4-phosphate and phosphoenolpyruvate: step 7/7. In terms of biological role, catalyzes the anti-1,4-elimination of the C-3 phosphate and the C-6 proR hydrogen from 5-enolpyruvylshikimate-3-phosphate (EPSP) to yield chorismate, which is the branch point compound that serves as the starting substrate for the three terminal pathways of aromatic amino acid biosynthesis. This reaction introduces a second double bond into the aromatic ring system. The chain is Chorismate synthase from Trichodesmium erythraeum (strain IMS101).